The chain runs to 513 residues: ATP synthase subunit alpha 1 (513 aa).

169 to 176 provides a ligand contact to ATP; that stretch reads GDRQTGKT.

The protein belongs to the ATPase alpha/beta chains family. As to quaternary structure, F-type ATPases have 2 components, CF(1) - the catalytic core - and CF(0) - the membrane proton channel. CF(1) has five subunits: alpha(3), beta(3), gamma(1), delta(1), epsilon(1). CF(0) has three main subunits: a(1), b(2) and c(9-12). The alpha and beta chains form an alternating ring which encloses part of the gamma chain. CF(1) is attached to CF(0) by a central stalk formed by the gamma and epsilon chains, while a peripheral stalk is formed by the delta and b chains.

It localises to the cell inner membrane. The enzyme catalyses ATP + H2O + 4 H(+)(in) = ADP + phosphate + 5 H(+)(out). Its function is as follows. Produces ATP from ADP in the presence of a proton gradient across the membrane. The alpha chain is a regulatory subunit. The polypeptide is ATP synthase subunit alpha 1 (Nitrosospira multiformis (strain ATCC 25196 / NCIMB 11849 / C 71)).